The primary structure comprises 372 residues: UDP-2-acetamido-2,6-beta-L-arabino-hexul-4-ose reductase (372 aa).

Residues 7–30, leucine 53, tyrosine 103, and lysine 107 each bind NAD(+); that span reads GANGFVGRNLCAHLAERGGIEVVP. Tyrosine 103 (proton acceptor) is an active-site residue. Substrate is bound by residues asparagine 132 and 279–282; that span reads HPGV.

Belongs to the NAD(P)-dependent epimerase/dehydratase family. In terms of assembly, homodimer.

It catalyses the reaction UDP-2-acetamido-2,6-dideoxy-beta-L-arabino-hex-4-ulose + NADH + H(+) = UDP-2-acetamido-2,6-dideoxy-beta-L-talose + NAD(+). The catalysed reaction is UDP-2-acetamido-2,6-dideoxy-beta-L-arabino-hex-4-ulose + NADPH + H(+) = UDP-2-acetamido-2,6-dideoxy-beta-L-talose + NADP(+). The protein operates within bacterial outer membrane biogenesis; LPS O-antigen biosynthesis. Its function is as follows. Bifunctional enzyme that mediates C-3 epimerization of the second intermediate followed by reduction at C-4 during serogroup O11 O-antigen biosynthesis, thus catalyzing the conversion of UDP-N-acetyl-D-glucosamine to precursors for the biosynthesis of O antigen. This chain is UDP-2-acetamido-2,6-beta-L-arabino-hexul-4-ose reductase, found in Pseudomonas aeruginosa (strain ATCC 29260 / BCRC 12902 / CIP 102967 / NCIMB 11965 / PA103).